The primary structure comprises 153 residues: Prophage Rz endopeptidase RzpD (153 aa).

Necessary for host cell lysis. It is believed to code for an endopeptidase that cleaves the amino-carboxyl cross-link between the diaminopimelic acid and D-alanine residues in the murein component of the bacterial cell wall. This Escherichia coli (strain K12) protein is Prophage Rz endopeptidase RzpD (rzpD).